Consider the following 130-residue polypeptide: Small ribosomal subunit protein uS11 (130 aa).

This sequence belongs to the universal ribosomal protein uS11 family. In terms of assembly, part of the 30S ribosomal subunit.

Functionally, located on the platform of the 30S subunit. The polypeptide is Small ribosomal subunit protein uS11 (Thermoplasma acidophilum (strain ATCC 25905 / DSM 1728 / JCM 9062 / NBRC 15155 / AMRC-C165)).